Here is a 502-residue protein sequence, read N- to C-terminus: Glycerol kinase (502 aa).

Threonine 14 contacts ADP. The ATP site is built by threonine 14, threonine 15, and serine 16. Position 14 (threonine 14) interacts with sn-glycerol 3-phosphate. Arginine 18 is an ADP binding site. Sn-glycerol 3-phosphate is bound by residues arginine 84, glutamate 85, and tyrosine 136. Residues arginine 84, glutamate 85, and tyrosine 136 each contribute to the glycerol site. Histidine 232 is modified (phosphohistidine; by HPr). Aspartate 246 provides a ligand contact to sn-glycerol 3-phosphate. The glycerol site is built by aspartate 246 and glutamine 247. Positions 268 and 311 each coordinate ADP. Residues threonine 268, glycine 311, glutamine 315, and glycine 412 each coordinate ATP. 2 residues coordinate ADP: glycine 412 and asparagine 416.

It belongs to the FGGY kinase family. Homotetramer and homodimer (in equilibrium). The phosphoenolpyruvate-dependent sugar phosphotransferase system (PTS), including enzyme I, and histidine-containing protein (HPr) are required for the phosphorylation, which leads to the activation of the enzyme.

It catalyses the reaction glycerol + ATP = sn-glycerol 3-phosphate + ADP + H(+). The protein operates within polyol metabolism; glycerol degradation via glycerol kinase pathway; sn-glycerol 3-phosphate from glycerol: step 1/1. With respect to regulation, activated by phosphorylation and inhibited by fructose 1,6-bisphosphate (FBP). Key enzyme in the regulation of glycerol uptake and metabolism. Catalyzes the phosphorylation of glycerol to yield sn-glycerol 3-phosphate. This chain is Glycerol kinase, found in Streptococcus pneumoniae (strain ATCC 700669 / Spain 23F-1).